The sequence spans 312 residues: tRNA-cytidine(32) 2-sulfurtransferase (312 aa).

The PP-loop motif signature appears at 39–44; it reads SGGKDS. Residues C114, C117, and C205 each coordinate [4Fe-4S] cluster.

This sequence belongs to the TtcA family. In terms of assembly, homodimer. It depends on Mg(2+) as a cofactor. [4Fe-4S] cluster serves as cofactor.

Its subcellular location is the cytoplasm. The enzyme catalyses cytidine(32) in tRNA + S-sulfanyl-L-cysteinyl-[cysteine desulfurase] + AH2 + ATP = 2-thiocytidine(32) in tRNA + L-cysteinyl-[cysteine desulfurase] + A + AMP + diphosphate + H(+). Its pathway is tRNA modification. In terms of biological role, catalyzes the ATP-dependent 2-thiolation of cytidine in position 32 of tRNA, to form 2-thiocytidine (s(2)C32). The sulfur atoms are provided by the cysteine/cysteine desulfurase (IscS) system. This Cupriavidus pinatubonensis (strain JMP 134 / LMG 1197) (Cupriavidus necator (strain JMP 134)) protein is tRNA-cytidine(32) 2-sulfurtransferase.